Here is a 1194-residue protein sequence, read N- to C-terminus: Immunoglobulin superfamily member 3 (1194 aa).

A signal peptide spans 1–19; that stretch reads MKCFFPVLSCLAVLGVVSA. Ig-like C2-type domains follow at residues 20-138, 143-262, 276-386, 401-539, 545-661, 676-803, 813-945, and 949-1097; these read QRQV…AKMN, PDSL…WYAM, PTDK…KTVT, PIIV…ISIT, FAVT…WTRL, PVTK…EEVS, PDSR…TALT, and PDAS…YRLT. Topologically, residues 20 to 1124 are extracellular; sequence QRQVTVQEGP…LQSIICSNDA (1105 aa). Disulfide bonds link cysteine 42–cysteine 120 and cysteine 167–cysteine 246. Residue asparagine 43 is glycosylated (N-linked (GlcNAc...) asparagine). The EWI motif motif lies at 250–252; the sequence is EWI. Cysteines 302 and 376 form a disulfide. Asparagine 418 carries an N-linked (GlcNAc...) asparagine glycan. Cystine bridges form between cysteine 432–cysteine 511 and cysteine 566–cysteine 645. A glycan (N-linked (GlcNAc...) asparagine) is linked at asparagine 655. Cystine bridges form between cysteine 701–cysteine 782, cysteine 838–cysteine 918, and cysteine 974–cysteine 1080. Asparagine 842 carries N-linked (GlcNAc...) asparagine glycosylation. A disordered region spans residues 997–1033; that stretch reads AGGKRSSPGLEEQEEEREEEEEEDDDDDDDPTERTAL. The segment covering 1007 to 1027 has biased composition (acidic residues); it reads EEQEEEREEEEEEDDDDDDDP. A glycan (N-linked (GlcNAc...) asparagine) is linked at asparagine 1077. The chain crosses the membrane as a helical span at residues 1125 to 1145; sequence LFYFVFFYPFPIFGILIITIL. Over 1146 to 1194 the chain is Cytoplasmic; it reads LVRFKSRNSSKNSDGKNGVPLLWIKEPHLNYSPTCLEPPVLSIHPGAID.

Expressed in a wide range of tissues with High expression in Placenta, kidney and lung.

It is found in the membrane. The chain is Immunoglobulin superfamily member 3 (IGSF3) from Homo sapiens (Human).